The sequence spans 64 residues: Conotoxin Ca5.3 (64 aa).

Residues 1 to 22 (MRCVPVFIILLLLIASAPGVDA) form the signal peptide. Residues 23 to 48 (QPKTKYNAPLTSLHDNAKGILQEHWN) constitute a propeptide that is removed on maturation. At Ile61 the chain carries Isoleucine amide.

It belongs to the conotoxin T superfamily. In terms of processing, contains 2 disulfide bonds that can be either 'C1-C3, C2-C4' or 'C1-C4, C2-C3', since these disulfide connectivities have been observed for conotoxins with cysteine framework V (for examples, see AC P0DQQ7 and AC P81755). As to expression, expressed by the venom duct.

Its subcellular location is the secreted. The protein is Conotoxin Ca5.3 of Conus caracteristicus (Characteristic cone).